A 239-amino-acid chain; its full sequence is 1-(5-phosphoribosyl)-5-[(5-phosphoribosylamino)methylideneamino] imidazole-4-carboxamide isomerase (239 aa).

The active-site Proton acceptor is the D8. D129 (proton donor) is an active-site residue.

Belongs to the HisA/HisF family.

The protein localises to the cytoplasm. The catalysed reaction is 1-(5-phospho-beta-D-ribosyl)-5-[(5-phospho-beta-D-ribosylamino)methylideneamino]imidazole-4-carboxamide = 5-[(5-phospho-1-deoxy-D-ribulos-1-ylimino)methylamino]-1-(5-phospho-beta-D-ribosyl)imidazole-4-carboxamide. Its pathway is amino-acid biosynthesis; L-histidine biosynthesis; L-histidine from 5-phospho-alpha-D-ribose 1-diphosphate: step 4/9. This chain is 1-(5-phosphoribosyl)-5-[(5-phosphoribosylamino)methylideneamino] imidazole-4-carboxamide isomerase, found in Bacillus cereus (strain AH187).